We begin with the raw amino-acid sequence, 236 residues long: GCN5-related N-acetyltransferase 8 (236 aa).

Residues 96 to 235 (ATITSSPSPD…DALEAFDQVN (140 aa)) form the N-acetyltransferase domain. Residues 161–163 (IFV), 169–174 (RKGFGS), 200–202 (NVN), and Y207 each bind acetyl-CoA. Y207 acts as the Proton donor in catalysis.

This sequence belongs to the acetyltransferase family. GNAT subfamily. In terms of assembly, oligomer. Expressed throughout the plant.

Its subcellular location is the cytoplasm. It localises to the nucleus. The enzyme catalyses an N-terminal L-alpha-aminoacyl-[protein] + acetyl-CoA = N-terminal N(alpha)-acetyl-L-alpha-aminoacyl-[protein] + CoA + H(+). It catalyses the reaction L-lysyl-[protein] + acetyl-CoA = N(6)-acetyl-L-lysyl-[protein] + CoA + H(+). In terms of biological role, probable protein acetyltransferase with dual specificity triggering both N-alpha-acetylation (NTA) and epsilon-lysine acetylation (KA). The chain is GCN5-related N-acetyltransferase 8 from Arabidopsis thaliana (Mouse-ear cress).